Consider the following 194-residue polypeptide: UPF0301 protein BT_0659 (194 aa).

It belongs to the UPF0301 (AlgH) family.

This chain is UPF0301 protein BT_0659, found in Bartonella tribocorum (strain CIP 105476 / IBS 506).